The following is a 1070-amino-acid chain: DNA-directed RNA polymerase subunit beta (1070 aa).

The protein belongs to the RNA polymerase beta chain family. As to quaternary structure, in plastids the minimal PEP RNA polymerase catalytic core is composed of four subunits: alpha, beta, beta', and beta''. When a (nuclear-encoded) sigma factor is associated with the core the holoenzyme is formed, which can initiate transcription.

It localises to the plastid. It is found in the chloroplast. The catalysed reaction is RNA(n) + a ribonucleoside 5'-triphosphate = RNA(n+1) + diphosphate. Its function is as follows. DNA-dependent RNA polymerase catalyzes the transcription of DNA into RNA using the four ribonucleoside triphosphates as substrates. In Solanum tuberosum (Potato), this protein is DNA-directed RNA polymerase subunit beta.